A 323-amino-acid polypeptide reads, in one-letter code: Pantothenate kinase (323 aa).

101 to 108 (GSVAVGKS) provides a ligand contact to ATP.

It belongs to the prokaryotic pantothenate kinase family.

It is found in the cytoplasm. It carries out the reaction (R)-pantothenate + ATP = (R)-4'-phosphopantothenate + ADP + H(+). It participates in cofactor biosynthesis; coenzyme A biosynthesis; CoA from (R)-pantothenate: step 1/5. This is Pantothenate kinase from Paenarthrobacter aurescens (strain TC1).